The chain runs to 397 residues: Endoglucanase (397 aa).

The active-site Proton donor is the Glu-194. The active-site Nucleophile is the Glu-317.

It belongs to the glycosyl hydrolase 5 (cellulase A) family.

The enzyme catalyses Endohydrolysis of (1-&gt;4)-beta-D-glucosidic linkages in cellulose, lichenin and cereal beta-D-glucans.. In Paenibacillus polymyxa (Bacillus polymyxa), this protein is Endoglucanase.